Consider the following 604-residue polypeptide: Aspartate--tRNA(Asp/Asn) ligase (604 aa).

Residue E174 coordinates L-aspartate. Residues 198 to 201 (QLYK) are aspartate. Residue R220 coordinates L-aspartate. ATP is bound by residues 220–222 (RDE) and Q229. An L-aspartate-binding site is contributed by H460. E494 is an ATP binding site. An L-aspartate-binding site is contributed by R501. 546 to 549 (GLDR) lines the ATP pocket.

It belongs to the class-II aminoacyl-tRNA synthetase family. Type 1 subfamily. In terms of assembly, homodimer.

The protein resides in the cytoplasm. It carries out the reaction tRNA(Asx) + L-aspartate + ATP = L-aspartyl-tRNA(Asx) + AMP + diphosphate. Functionally, aspartyl-tRNA synthetase with relaxed tRNA specificity since it is able to aspartylate not only its cognate tRNA(Asp) but also tRNA(Asn). Reaction proceeds in two steps: L-aspartate is first activated by ATP to form Asp-AMP and then transferred to the acceptor end of tRNA(Asp/Asn). The protein is Aspartate--tRNA(Asp/Asn) ligase of Paracidovorax citrulli (strain AAC00-1) (Acidovorax citrulli).